The following is an 82-amino-acid chain: Conotoxin Cal30 (82 aa).

Residues Met1–Ser19 form the signal peptide.

Post-translationally, may contain 5 disulfide bonds. Expressed by the venom duct.

It is found in the secreted. Its function is as follows. Probable neurotoxin. The chain is Conotoxin Cal30 from Californiconus californicus (California cone).